Consider the following 437-residue polypeptide: MTTFSPREIVSELDRFIVGQKDAKRAVAIALRNRWRRQQLKGPLRDEVAPKNILMIGPTGCGKTEIARRLARLAGAPFLKVEATKFTEVGYVGRDVEQIVRDLVEVGIGLTREEKRKAVKAKAEAAAESRILDALVGPTASQATRESFRKKLRNSELDDKEVEIELAPSGPQGMPMFEIPGMPGASMGAINISDMLGKALGGQRGKPRRITVADAYAPLIAEESDKLVDDDALTREAIREVEDNGIVFLDEIDKICAREGRSGADVSREGVQRDLLPLIEGTTVATKHGPVKTDHILFIASGAFHVSKPSDLLPELQGRLPIRVELQPLTVEDFKQILTATEASLIKQTVALMETEGVTLDFTEDAIDALARVAVEVNGSVENIGARRLQTVLERVIDEISFTATDRSGETVPIDAGYVRERVADLAANTDLSRFIL.

Residues valine 18, 60–65 (GCGKTE), aspartate 250, glutamate 315, and arginine 387 contribute to the ATP site.

The protein belongs to the ClpX chaperone family. HslU subfamily. A double ring-shaped homohexamer of HslV is capped on each side by a ring-shaped HslU homohexamer. The assembly of the HslU/HslV complex is dependent on binding of ATP.

It is found in the cytoplasm. In terms of biological role, ATPase subunit of a proteasome-like degradation complex; this subunit has chaperone activity. The binding of ATP and its subsequent hydrolysis by HslU are essential for unfolding of protein substrates subsequently hydrolyzed by HslV. HslU recognizes the N-terminal part of its protein substrates and unfolds these before they are guided to HslV for hydrolysis. This is ATP-dependent protease ATPase subunit HslU from Methylorubrum populi (strain ATCC BAA-705 / NCIMB 13946 / BJ001) (Methylobacterium populi).